The sequence spans 572 residues: Acyl-coenzyme A synthetase ACSM2, mitochondrial (572 aa).

A mitochondrion-targeting transit peptide spans 1 to 46 (MHWLWKIPRLCTFWGTEMFHRTFHMNIKKLMPIQWGHQEVPAKFNF). Gln-139 contributes to the CoA binding site. ATP-binding positions include 221 to 229 (TSGTSGPPK), 359 to 364 (EIYGQT), Asp-446, and Arg-461. Thr-364 provides a ligand contact to substrate. Residue 469–471 (SGY) participates in CoA binding. Arg-472 is a substrate binding site. Residues Arg-501, Lys-532, and 540-542 (YPR) each bind CoA. Lys-557 contributes to the ATP binding site.

It belongs to the ATP-dependent AMP-binding enzyme family. As to quaternary structure, monomer. The cofactor is Mg(2+). Mn(2+) serves as cofactor. As to expression, detected in kidney, in proximal tubules.

The protein localises to the mitochondrion. It catalyses the reaction a medium-chain fatty acid + ATP + CoA = a medium-chain fatty acyl-CoA + AMP + diphosphate. The catalysed reaction is benzoate + ATP + CoA = benzoyl-CoA + AMP + diphosphate. The enzyme catalyses hexanoate + ATP + CoA = hexanoyl-CoA + AMP + diphosphate. It carries out the reaction butanoate + ATP + CoA = butanoyl-CoA + AMP + diphosphate. It catalyses the reaction octanoate + ATP + CoA = octanoyl-CoA + AMP + diphosphate. The catalysed reaction is decanoate + ATP + CoA = decanoyl-CoA + AMP + diphosphate. Its function is as follows. Catalyzes the activation of fatty acids by CoA to produce an acyl-CoA, the first step in fatty acid metabolism. Capable of activating medium-chain fatty acids (e.g. butyric (C4) to decanoic (C10) acids), and certain carboxylate-containing xenobiotics, e.g. benzoate. This chain is Acyl-coenzyme A synthetase ACSM2, mitochondrial (Acsm2), found in Rattus norvegicus (Rat).